The primary structure comprises 90 residues: Gene 56 protein (90 aa).

In terms of domain architecture, Glutaredoxin spans 1-90 (MRTMFTPITI…DYYTASETGL (90 aa)). C16 and C19 are oxidised to a cystine.

This Mycobacterium phage D29 (Mycobacteriophage D29) protein is Gene 56 protein (56).